The sequence spans 397 residues: Trans-2-enoyl-CoA reductase [NADH] (397 aa).

NAD(+) is bound by residues 53-58 (GCSNGY), 79-80 (FE), 116-117 (DA), and 144-145 (LA). Residue Y230 participates in substrate binding. The Proton donor role is filled by Y240. Residues K249 and 276–278 (LVT) each bind NAD(+).

Belongs to the TER reductase family. In terms of assembly, monomer.

It carries out the reaction a 2,3-saturated acyl-CoA + NAD(+) = a (2E)-enoyl-CoA + NADH + H(+). It functions in the pathway lipid metabolism; fatty acid biosynthesis. Its activity is regulated as follows. Inhibited by lauroyl-CoA. Its function is as follows. Involved in the fatty acid synthesis (FAS II). Catalyzes the reduction of the carbon-carbon double bond of crotonyl-CoA to yield butyryl-CoA. In vitro it can also use hexenoyl-CoA and dodecenoyl-CoA as substrates. This Treponema denticola (strain ATCC 35405 / DSM 14222 / CIP 103919 / JCM 8153 / KCTC 15104) protein is Trans-2-enoyl-CoA reductase [NADH].